A 47-amino-acid polypeptide reads, in one-letter code: Delta-actitoxin-Axm1g (47 aa).

3 cysteine pairs are disulfide-bonded: Cys4–Cys44, Cys6–Cys34, and Cys27–Cys45.

Belongs to the sea anemone sodium channel inhibitory toxin family. Type I subfamily.

It is found in the secreted. It localises to the nematocyst. The protein is Delta-actitoxin-Axm1g of Anthopleura xanthogrammica (Giant green sea anemone).